The chain runs to 140 residues: Aspartate 1-decarboxylase (140 aa).

Residue Ser-25 is the Schiff-base intermediate with substrate; via pyruvic acid of the active site. A Pyruvic acid (Ser) modification is found at Ser-25. Substrate is bound at residue Thr-57. The active-site Proton donor is Tyr-58. A substrate-binding site is contributed by 73-75; that stretch reads GAA.

This sequence belongs to the PanD family. Heterooctamer of four alpha and four beta subunits. Pyruvate serves as cofactor. Post-translationally, is synthesized initially as an inactive proenzyme, which is activated by self-cleavage at a specific serine bond to produce a beta-subunit with a hydroxyl group at its C-terminus and an alpha-subunit with a pyruvoyl group at its N-terminus.

The protein resides in the cytoplasm. It catalyses the reaction L-aspartate + H(+) = beta-alanine + CO2. The protein operates within cofactor biosynthesis; (R)-pantothenate biosynthesis; beta-alanine from L-aspartate: step 1/1. Its function is as follows. Catalyzes the pyruvoyl-dependent decarboxylation of aspartate to produce beta-alanine. This Persephonella marina (strain DSM 14350 / EX-H1) protein is Aspartate 1-decarboxylase.